The chain runs to 364 residues: Methylthioribose-1-phosphate isomerase (364 aa).

Catalysis depends on D246, which acts as the Proton donor.

Belongs to the eIF-2B alpha/beta/delta subunits family. MtnA subfamily.

Its subcellular location is the cytoplasm. It is found in the nucleus. The catalysed reaction is 5-(methylsulfanyl)-alpha-D-ribose 1-phosphate = 5-(methylsulfanyl)-D-ribulose 1-phosphate. The protein operates within amino-acid biosynthesis; L-methionine biosynthesis via salvage pathway; L-methionine from S-methyl-5-thio-alpha-D-ribose 1-phosphate: step 1/6. Functionally, catalyzes the interconversion of methylthioribose-1-phosphate (MTR-1-P) into methylthioribulose-1-phosphate (MTRu-1-P). In Bombyx mori (Silk moth), this protein is Methylthioribose-1-phosphate isomerase.